Consider the following 1456-residue polypeptide: MRLLLLLAFISVIPVSVQLLDARQFLIYNEDHKRCVDALSAISVQTATCNPEAESQKFRWVSDSQIMSVAFKLCLGVPSKTDWASVTLYACDSKSEYQKWECKNDTLFGIKGTELYFNYGNRQEKNIKLYKGSGLWSRWKVYGTTDDLCSRGYEAMYSLLGNANGAVCAFPFKFENKWYADCTSAGRSDGWLWCGTTTDYDKDKLFGFCPLHFEGSERLWNKDPLTGILYQINSKSALTWHQARASCKQQNADLLSVTEIHEQMYLTGLTSSLSSGLWIGLNSLSVRSGWQWAGGSPFRYLNWLPGSPSSEPGKSCVSLNPGKNAKWENLECVQKLGYICKKGNNTLNPFIIPSASDVPTGCPNQWWPYAGHCYRIHREEKKIQKYALQACRKEGGDLASIHSIEEFDFIFSQLGYEPNDELWIGLNDIKIQMYFEWSDGTPVTFTKWLPGEPSHENNRQEDCVVMKGKDGYWADRACEQPLGYICKMVSQSHAVVPEGADKGCRKGWKRHGFYCYLIGSTLSTFTDANHTCTNEKAYLTTVEDRYEQAFLTSLVGLRPEKYFWTGLSDVQNKGTFRWTVDEQVQFTHWNADMPGRKAGCVAMKTGVAGGLWDVLSCEEKAKFVCKHWAEGVTRPPEPTTTPEPKCPENWGTTSKTSMCFKLYAKGKHEKKTWFESRDFCKAIGGELASIKSKDEQQVIWRLITSSGSYHELFWLGLTYGSPSEGFTWSDGSPVSYENWAYGEPNNYQNVEYCGELKGDPGMSWNDINCEHLNNWICQIQKGKTLLPEPTPAPQDNPPVTADGWVIYKDYQYYFSKEKETMDNARAFCKKNFGDLATIKSESEKKFLWKYINKNGGQSPYFIGMLISMDKKFIWMDGSKVDFVAWATGEPNFANDDENCVTMYTNSGFWNDINCGYPNNFICQRHNSSINATAMPTTPTTPGGCKEGWHLYKNKCFKIFGFANEEKKSWQDARQACKGLKGNLVSIENAQEQAFVTYHMRDSTFNAWTGLNDINAEHMFLWTAGQGVHYTNWGKGYPGGRRSSLSYEDADCVVVIGGNSREAGTWMDDTCDSKQGYICQTQTDPSLPVSPTTTPKDGFVTYGKSSYSLMKLKLPWHEAETYCKDHTSLLASILDPYSNAFAWMKMHPFNVPIWIALNSNLTNNEYTWTDRWRVRYTNWGADEPKLKSACVYMDVDGYWRTSYCNESFYFLCKKSDEIPATEPPQLPGKCPESEQTAWIPFYGHCYYFESSFTRSWGQASLECLRMGASLVSIETAAESSFLSYRVEPLKSKTNFWIGMFRNVEGKWLWLNDNPVSFVNWKTGDPSGERNDCVVLASSSGLWNNIHCSSYKGFICKMPKIIDPVTTHSSITTKADQRKMDPQPKGSSKAAGVVTVVLLIVIGAGVAAYFFYKKRHALHIPQEATFENTLYFNSNLSPGTSDTKDLMGNIEQNEHAII.

The first 19 residues, 1-19 (MRLLLLLAFISVIPVSVQL), serve as a signal peptide directing secretion. Residues 20-1388 (LDARQFLIYN…DPQPKGSSKA (1369 aa)) lie on the Extracellular side of the membrane. A Ricin B-type lectin domain is found at 22–142 (ARQFLIYNED…SGLWSRWKVY (121 aa)). 7 cysteine pairs are disulfide-bonded: C35–C49, C74–C91, C102–C149, C168–C194, C182–C209, C247–C340, and C316–C332. Residue N104 is glycosylated (N-linked (GlcNAc...) asparagine). One can recognise a Fibronectin type-II domain in the interval 163–211 (ANGAVCAFPFKFENKWYADCTSAGRSDGWLWCGTTTDYDKDKLFGFCPL). Positions 225–341 (LTGILYQINS…CVQKLGYICK (117 aa)) constitute a C-type lectin 1 domain. N344 carries an N-linked (GlcNAc...) asparagine glycan. 4 C-type lectin domains span residues 369-487 (YAGH…YICK), 511-626 (HGFY…FVCK), 655-778 (KTSM…WICQ), and 807-923 (YKDY…FICQ). Disulfide bonds link C391–C486 and C463–C478. An N-linked (GlcNAc...) asparagine glycan is attached at N529. Cystine bridges form between C532-C625, C600-C617, C680-C777, C753-C769, C828-C922, and C899-C914. N-linked (GlcNAc...) asparagine glycans are attached at residues N926 and N930. C-type lectin domains lie at 951 to 1079 (YKNK…YICQ), 1101 to 1212 (YGKS…FLCK), and 1240 to 1355 (FYGH…FICK). Cystine bridges form between C976/C1078, C1051/C1070, C1122/C1211, C1189/C1203, C1262/C1354, and C1331/C1346. N1159 carries N-linked (GlcNAc...) asparagine glycosylation. An N-linked (GlcNAc...) asparagine glycan is attached at N1204. A helical transmembrane segment spans residues 1389–1409 (AGVVTVVLLIVIGAGVAAYFF). Over 1410–1456 (YKKRHALHIPQEATFENTLYFNSNLSPGTSDTKDLMGNIEQNEHAII) the chain is Cytoplasmic.

As to expression, detected in macrophages.

The protein resides in the endosome membrane. Its subcellular location is the cell membrane. Mediates the endocytosis of glycoproteins by macrophages. Binds both sulfated and non-sulfated polysaccharide chains. Acts as phagocytic receptor for bacteria, fungi and other pathogens. The chain is Macrophage mannose receptor 1 (Mrc1) from Mus musculus (Mouse).